A 92-amino-acid chain; its full sequence is CRISPR-associated endoribonuclease Cas2 1 (92 aa).

D10 serves as a coordination point for Mg(2+).

Belongs to the CRISPR-associated endoribonuclease Cas2 protein family. As to quaternary structure, homodimer, forms a heterotetramer with a Cas1 homodimer. Requires Mg(2+) as cofactor.

In terms of biological role, CRISPR (clustered regularly interspaced short palindromic repeat), is an adaptive immune system that provides protection against mobile genetic elements (viruses, transposable elements and conjugative plasmids). CRISPR clusters contain sequences complementary to antecedent mobile elements and target invading nucleic acids. CRISPR clusters are transcribed and processed into CRISPR RNA (crRNA). Functions as a ssRNA-specific endoribonuclease. Involved in the integration of spacer DNA into the CRISPR cassette. The protein is CRISPR-associated endoribonuclease Cas2 1 of Thermodesulfovibrio yellowstonii (strain ATCC 51303 / DSM 11347 / YP87).